The sequence spans 696 residues: Translation factor waclaw, mitochondrial (696 aa).

Residues 1–76 (MIVGYSVFFH…RNLSTTNQVK (76 aa)) constitute a mitochondrion transit peptide. The 182-residue stretch at 97-278 (ERIRNFSIIA…RVIETVPPPQ (182 aa)) folds into the tr-type G domain. Residues 106–113 (AHVDHGKS), 171–175 (DTPGH), and 225–228 (NKID) each bind GTP.

Belongs to the TRAFAC class translation factor GTPase superfamily. Classic translation factor GTPase family. LepA subfamily.

It is found in the mitochondrion inner membrane. The catalysed reaction is GTP + H2O = GDP + phosphate + H(+). Its function is as follows. Promotes mitochondrial protein synthesis. May act as a fidelity factor of the translation reaction, by catalyzing a one-codon backward translocation of tRNAs on improperly translocated ribosomes. Binds to mitochondrial ribosomes in a GTP-dependent manner. In Drosophila melanogaster (Fruit fly), this protein is Translation factor waclaw, mitochondrial.